A 305-amino-acid chain; its full sequence is UPF0282 protein Tneu_0934 (305 aa).

This sequence belongs to the UPF0282 family.

The polypeptide is UPF0282 protein Tneu_0934 (Pyrobaculum neutrophilum (strain DSM 2338 / JCM 9278 / NBRC 100436 / V24Sta) (Thermoproteus neutrophilus)).